The sequence spans 532 residues: O-phosphoserine--tRNA(Cys) ligase (532 aa).

Substrate is bound by residues 186–188 (HMT), 231–233 (SAS), 273–274 (YY), and Asn317.

Belongs to the class-II aminoacyl-tRNA synthetase family. O-phosphoseryl-tRNA(Cys) synthetase subfamily. Homotetramer. Interacts with SepCysS.

It catalyses the reaction tRNA(Cys) + O-phospho-L-serine + ATP = O-phospho-L-seryl-tRNA(Cys) + AMP + diphosphate. In terms of biological role, catalyzes the attachment of O-phosphoserine (Sep) to tRNA(Cys). This is O-phosphoserine--tRNA(Cys) ligase from Methanothermobacter thermautotrophicus (strain ATCC 29096 / DSM 1053 / JCM 10044 / NBRC 100330 / Delta H) (Methanobacterium thermoautotrophicum).